Here is a 371-residue protein sequence, read N- to C-terminus: DNA replication and repair protein RecF (371 aa).

30–37 (GANAQGKT) lines the ATP pocket.

This sequence belongs to the RecF family.

It is found in the cytoplasm. Functionally, the RecF protein is involved in DNA metabolism; it is required for DNA replication and normal SOS inducibility. RecF binds preferentially to single-stranded, linear DNA. It also seems to bind ATP. This chain is DNA replication and repair protein RecF, found in Lacticaseibacillus casei (strain BL23) (Lactobacillus casei).